The sequence spans 302 residues: Sodium/potassium-transporting ATPase subunit beta-233 (302 aa).

The Cytoplasmic portion of the chain corresponds to 1–30; it reads MSGNKDSDGGWKTFIWNSEKKELLGRTGCS. Residues 31 to 51 traverse the membrane as a helical; Signal-anchor for type II membrane protein segment; it reads WFKILLFYVIFYGCLAAVFVG. The Extracellular segment spans residues 52–302; the sequence is TIQALLLTLS…FDIKITVNDS (251 aa). 2 cysteine pairs are disulfide-bonded: C125–C148 and C158–C174. N-linked (GlcNAc...) asparagine glycosylation is found at N193 and N263. An intrachain disulfide couples C213 to C274.

The protein belongs to the X(+)/potassium ATPases subunit beta family. As to quaternary structure, the sodium/potassium-transporting ATPase is composed of a catalytic alpha subunit, an auxiliary non-catalytic beta subunit and an additional regulatory subunit. Post-translationally, glycosylated. In terms of tissue distribution, expressed mainly in epithelial tissues.

It localises to the cell membrane. Its function is as follows. This is the non-catalytic component of the active enzyme, which catalyzes the hydrolysis of ATP coupled with the exchange of Na(+) and K(+) ions across the plasma membrane. The beta subunit regulates, through assembly of alpha/beta heterodimers, the number of sodium pumps transported to the plasma membrane. In Anguilla anguilla (European freshwater eel), this protein is Sodium/potassium-transporting ATPase subunit beta-233.